The sequence spans 226 residues: Insulin-like growth factor-binding protein 6 (226 aa).

Residues 1–25 form the signal peptide; that stretch reads MTWDGLPTQPLLMLLMLLFAAGSES. The region spanning 26–99 is the IGFBP N-terminal domain; that stretch reads ALAGCPGCGP…LIGQGRCQRA (74 aa). 4 cysteine pairs are disulfide-bonded: Cys30/Cys33, Cys49/Cys55, Cys63/Cys76, and Cys70/Cys96. The segment at 92-148 is disordered; the sequence is GQGRCQRARGPSEETTKESKPHGGASRPRDRDRQKNPRTSAAPIRPSPVQDGEMGPC. Positions 101–126 are enriched in basic and acidic residues; it reads GPSEETTKESKPHGGASRPRDRDRQK. The 76-residue stretch at 145–220 folds into the Thyroglobulin type-1 domain; the sequence is MGPCRRHLDS…SPDGQGSSQC (76 aa). 3 cysteine pairs are disulfide-bonded: Cys148-Cys176, Cys187-Cys198, and Cys200-Cys220. Positions 205-226 are disordered; that stretch reads GQPLPVSPDGQGSSQCSARSSG. A compositionally biased stretch (polar residues) spans 214–226; that stretch reads GQGSSQCSARSSG.

Interacts (via C-terminal domain) with PHB2. O-glycosylated.

The protein localises to the secreted. Its function is as follows. IGF-binding proteins prolong the half-life of the IGFs and have been shown to either inhibit or stimulate the growth promoting effects of the IGFs on cell culture. They alter the interaction of IGFs with their cell surface receptors. Activates the MAPK signaling pathway and induces cell migration. The sequence is that of Insulin-like growth factor-binding protein 6 (Igfbp6) from Rattus norvegicus (Rat).